A 60-amino-acid polypeptide reads, in one-letter code: LFTLVVLLMVSADMAFAGFGCPRDQYKCNSHCQSIGCRAGYCDAVTLWLRCTCTDCNGKK.

Residues 1-17 form the signal peptide; the sequence is LFTLVVLLMVSADMAFA. Residues F19, G20, and C21 each contribute to the beta-D-GlcNAc-(1-&gt;4)-Mur2Ac(oyl-L-Ala-gamma-D-Glu-L-Lys-D-Ala-D-Ala)-di-trans,octa-cis-undecaprenyl diphosphate site. Disulfide bonds link C21–C42, C28–C51, C32–C53, and C37–C56. A binds to membrane interface region spans residues 22 to 25; the sequence is PRDQ. H31 serves as a coordination point for beta-D-GlcNAc-(1-&gt;4)-Mur2Ac(oyl-L-Ala-gamma-D-Glu-L-Lys-D-Ala-D-Ala)-di-trans,octa-cis-undecaprenyl diphosphate. Positions 43–49 are binds to membrane interface; the sequence is DAVTLWL. C51 serves as a coordination point for beta-D-GlcNAc-(1-&gt;4)-Mur2Ac(oyl-L-Ala-gamma-D-Glu-L-Lys-D-Ala-D-Ala)-di-trans,octa-cis-undecaprenyl diphosphate.

It belongs to the invertebrate defensin family. Expressed in hemocytes.

It localises to the secreted. The protein resides in the target cell membrane. Antibacterial peptide mostly active against Gram-positive bacteria. It acts by selectively inhibiting peptidoglycan biosynthesis through complex formation with the cell wall precursor lipid II (1:1 molar ratio) thus inhibiting cell wall synthesis. It does not disrupt cell membranes. Is noticeably less potent than Cg-Defh2 and Cg-Defm. Shows no or limited activities against Gram-negative bacteria. This is Hemocyte defensin Cg-Defh1 from Magallana gigas (Pacific oyster).